Here is a 302-residue protein sequence, read N- to C-terminus: Tyrosine--tRNA ligase 2 (302 aa).

Tyr33 serves as a coordination point for L-tyrosine. The short motif at 38 to 47 (PTADSLHLGH) is the 'HIGH' region element. The L-tyrosine site is built by Tyr160 and Gln164. A 'KMSKS' region motif is present at residues 220-224 (KFGKS). Lys223 is an ATP binding site.

Belongs to the class-I aminoacyl-tRNA synthetase family. TyrS type 1 subfamily. In terms of assembly, homodimer.

The protein resides in the cytoplasm. It catalyses the reaction tRNA(Tyr) + L-tyrosine + ATP = L-tyrosyl-tRNA(Tyr) + AMP + diphosphate + H(+). Functionally, catalyzes the attachment of tyrosine to tRNA(Tyr) in a two-step reaction: tyrosine is first activated by ATP to form Tyr-AMP and then transferred to the acceptor end of tRNA(Tyr). The protein is Tyrosine--tRNA ligase 2 (tyrS2) of Streptococcus thermophilus (strain CNRZ 1066).